Reading from the N-terminus, the 49-residue chain is Small, acid-soluble spore protein O (49 aa).

Residues 1–49 form a disordered region; that stretch reads MGKRKANHTISGMNVASAQGQGTGYNEEFANEPLTPAERQNNKKRKKNQ. Residues 8–20 are compositionally biased toward polar residues; it reads HTISGMNVASAQG.

The protein belongs to the SspO family.

Its subcellular location is the spore core. The sequence is that of Small, acid-soluble spore protein O from Bacillus cereus (strain G9842).